The chain runs to 153 residues: Ribosome maturation factor RimP (153 aa).

It belongs to the RimP family.

Its subcellular location is the cytoplasm. Its function is as follows. Required for maturation of 30S ribosomal subunits. The protein is Ribosome maturation factor RimP of Trichormus variabilis (strain ATCC 29413 / PCC 7937) (Anabaena variabilis).